Reading from the N-terminus, the 240-residue chain is UDP-2,3-diacylglucosamine hydrolase (240 aa).

The Mn(2+) site is built by Asp8, His10, Asp41, Asn79, and His114. Residue 79 to 80 (NR) coordinates substrate. The substrate site is built by Asp122, Ser160, Asn164, Lys167, and His195. 2 residues coordinate Mn(2+): His195 and His197.

The protein belongs to the LpxH family. The cofactor is Mn(2+).

The protein localises to the cell inner membrane. The catalysed reaction is UDP-2-N,3-O-bis[(3R)-3-hydroxytetradecanoyl]-alpha-D-glucosamine + H2O = 2-N,3-O-bis[(3R)-3-hydroxytetradecanoyl]-alpha-D-glucosaminyl 1-phosphate + UMP + 2 H(+). It functions in the pathway glycolipid biosynthesis; lipid IV(A) biosynthesis; lipid IV(A) from (3R)-3-hydroxytetradecanoyl-[acyl-carrier-protein] and UDP-N-acetyl-alpha-D-glucosamine: step 4/6. Functionally, hydrolyzes the pyrophosphate bond of UDP-2,3-diacylglucosamine to yield 2,3-diacylglucosamine 1-phosphate (lipid X) and UMP by catalyzing the attack of water at the alpha-P atom. Involved in the biosynthesis of lipid A, a phosphorylated glycolipid that anchors the lipopolysaccharide to the outer membrane of the cell. This is UDP-2,3-diacylglucosamine hydrolase from Serratia proteamaculans (strain 568).